The following is a 332-amino-acid chain: Fructose-1,6-bisphosphatase class 1 (332 aa).

Mg(2+) contacts are provided by Glu-89, Asp-110, Leu-112, and Asp-113. Substrate contacts are provided by residues 113–116, Asn-206, Tyr-239, 257–259, and Lys-269; these read DGSS and YLY. Residue Glu-275 participates in Mg(2+) binding.

This sequence belongs to the FBPase class 1 family. In terms of assembly, homotetramer. Mg(2+) is required as a cofactor.

It is found in the cytoplasm. The enzyme catalyses beta-D-fructose 1,6-bisphosphate + H2O = beta-D-fructose 6-phosphate + phosphate. The protein operates within carbohydrate biosynthesis; gluconeogenesis. In Klebsiella pneumoniae (strain 342), this protein is Fructose-1,6-bisphosphatase class 1.